The following is a 398-amino-acid chain: Diaminopropionate ammonia-lyase (398 aa).

Position 77 is an N6-(pyridoxal phosphate)lysine (K77).

The protein belongs to the diaminopropionate ammonia-lyase family. Homodimer. Pyridoxal 5'-phosphate serves as cofactor.

The enzyme catalyses (S)-2,3-diaminopropanoate + H2O + H(+) = pyruvate + 2 NH4(+). It catalyses the reaction (R)-2,3-diaminopropanoate + H2O + H(+) = pyruvate + 2 NH4(+). In terms of biological role, catalyzes the alpha,beta-elimination reaction of both L- and D-alpha,beta-diaminopropionate (DAP) to form pyruvate and ammonia. The D-isomer of serine is degraded to pyruvate, though very poorly; other amino acids (L-serine, D- and L-threonine, D- and L-beta-Cl-alanine) are not substrates. In Escherichia coli O157:H7, this protein is Diaminopropionate ammonia-lyase (ygeX).